The chain runs to 159 residues: Transcriptional repressor NrdR (159 aa).

Positions 1–11 (MQCPTCQNTDS) are enriched in polar residues. The interval 1-21 (MQCPTCQNTDSRVLESRSADS) is disordered. Residues 3 to 34 (CPTCQNTDSRVLESRSADSGKSVRRRRECLNC) fold into a zinc finger. The ATP-cone domain occupies 49–139 (VSVMKKDGSR…VYRKFNGVKD (91 aa)).

It belongs to the NrdR family. The cofactor is Zn(2+).

Functionally, negatively regulates transcription of bacterial ribonucleotide reductase nrd genes and operons by binding to NrdR-boxes. The sequence is that of Transcriptional repressor NrdR from Prochlorococcus marinus (strain MIT 9215).